The primary structure comprises 235 residues: RNA polymerase sigma-E factor (235 aa).

The Polymerase core binding signature appears at 82 to 95; that stretch reads DLISVGTIGLIKAV. Residues 202–221 constitute a DNA-binding region (H-T-H motif); sequence QKEVADMLGISQSYISRLEK.

The protein belongs to the sigma-70 factor family.

In terms of biological role, sigma factors are initiation factors that promote the attachment of RNA polymerase to specific initiation sites and are then released. This sigma factor is responsible for the expression of sporulation specific genes. The protein is RNA polymerase sigma-E factor (sigE) of Clostridium acetobutylicum (strain ATCC 824 / DSM 792 / JCM 1419 / IAM 19013 / LMG 5710 / NBRC 13948 / NRRL B-527 / VKM B-1787 / 2291 / W).